Here is a 265-residue protein sequence, read N- to C-terminus: MSSLISFIFLFLFSFLTSFKASAQDPFYLNHYCPNTTTYSRFSTYSTNLRTLLSSFASRNASYSTGFQNVTVGQTPDLVTGLFLCRGDLSPEVCSNCVAFSVDEALTRCPSQREAVFYYEECILRYSDKNILSTAITNEGEFILSNTNTISPNQSQINQFIVLVQSNMNQAAMEAANSSRKFSTIKTELTELQTLYGLVQCTPDLTSQDCLRCLTRSINRMPLSRIGARQFWPSCNSRYELYSFYNETTIGTPSPPPPPSPSRAN.

The signal sequence occupies residues 1 to 23; it reads MSSLISFIFLFLFSFLTSFKASA. 2 consecutive Gnk2-homologous domains span residues 27–131 and 142–244; these read FYLN…DKNI and FILS…LYSF. N-linked (GlcNAc...) asparagine glycans are attached at residues Asn35, Asn60, Asn69, Asn153, Asn177, and Asn246.

This sequence belongs to the protein kinase superfamily. Ser/Thr protein kinase family. CRK subfamily.

The protein localises to the secreted. The protein is Putative cysteine-rich receptor-like protein kinase 9 (CRK9) of Arabidopsis thaliana (Mouse-ear cress).